Consider the following 815-residue polypeptide: Translation initiation factor IF-2 (815 aa).

The segment covering 153–176 (VQEKEAEKKVEKLKTADKPKEGNK) has biased composition (basic and acidic residues). Residues 153–219 (VQEKEAEKKV…THLSQKIQAE (67 aa)) form a disordered region. Positions 191–209 (KQLHVARHNPNRRLKKKDR) are enriched in basic residues. The tr-type G domain occupies 315–482 (ARPPIVTIMG…AISLTAEILE (168 aa)). The tract at residues 324–331 (GHVDHGKT) is G1. 324–331 (GHVDHGKT) provides a ligand contact to GTP. A G2 region spans residues 349–353 (GITQH). A G3 region spans residues 370–373 (DTPG). GTP is bound by residues 370-374 (DTPGH) and 424-427 (NKID). The interval 424–427 (NKID) is G4. The tract at residues 460–462 (SAH) is G5.

It belongs to the TRAFAC class translation factor GTPase superfamily. Classic translation factor GTPase family. IF-2 subfamily.

It is found in the cytoplasm. Functionally, one of the essential components for the initiation of protein synthesis. Protects formylmethionyl-tRNA from spontaneous hydrolysis and promotes its binding to the 30S ribosomal subunits. Also involved in the hydrolysis of GTP during the formation of the 70S ribosomal complex. The polypeptide is Translation initiation factor IF-2 (Vesicomyosocius okutanii subsp. Calyptogena okutanii (strain HA)).